The chain runs to 328 residues: UDP-glucose 4-epimerase (328 aa).

A substrate-binding site is contributed by Thr-119. Residue Tyr-143 is the Proton acceptor of the active site.

Belongs to the NAD(P)-dependent epimerase/dehydratase family. NAD(+) is required as a cofactor.

The catalysed reaction is UDP-alpha-D-glucose = UDP-alpha-D-galactose. The protein operates within carbohydrate metabolism; galactose metabolism. Its pathway is glycan metabolism; exopolysaccharide biosynthesis. This Rhizobium meliloti (strain 1021) (Ensifer meliloti) protein is UDP-glucose 4-epimerase (exoB).